Here is a 958-residue protein sequence, read N- to C-terminus: Probable transport protein MmpL1 (958 aa).

12 consecutive transmembrane segments (helical) span residues 19-39, 192-212, 216-236, 252-272, 295-315, 329-349, 377-397, 762-782, 791-811, 814-834, 868-888, and 906-927; these read ALSL…NVVA, SLHT…FIAY, SAAL…RGII, VNVL…FLVG, TAHV…CLGF, AIGL…IIAV, WPGP…LALP, YDVM…MLGI, VIVG…VLIW, ILHM…MLAV, VVTI…ASDL, and TLVV…WFWW.

Belongs to the resistance-nodulation-cell division (RND) (TC 2.A.6) family. MmpL subfamily.

It is found in the cell membrane. In Mycobacterium tuberculosis (strain CDC 1551 / Oshkosh), this protein is Probable transport protein MmpL1 (mmpL1).